A 113-amino-acid polypeptide reads, in one-letter code: Large ribosomal subunit protein uL22 (113 aa).

Belongs to the universal ribosomal protein uL22 family. Part of the 50S ribosomal subunit.

This protein binds specifically to 23S rRNA; its binding is stimulated by other ribosomal proteins, e.g. L4, L17, and L20. It is important during the early stages of 50S assembly. It makes multiple contacts with different domains of the 23S rRNA in the assembled 50S subunit and ribosome. Functionally, the globular domain of the protein is located near the polypeptide exit tunnel on the outside of the subunit, while an extended beta-hairpin is found that lines the wall of the exit tunnel in the center of the 70S ribosome. The polypeptide is Large ribosomal subunit protein uL22 (Roseiflexus sp. (strain RS-1)).